The chain runs to 86 residues: Large ribosomal subunit protein bL27 (86 aa).

Residues 1 to 24 form a disordered region; the sequence is MAHKKAGGSTRNGRDSESKRLGVK.

Belongs to the bacterial ribosomal protein bL27 family.

This is Large ribosomal subunit protein bL27 from Alcanivorax borkumensis (strain ATCC 700651 / DSM 11573 / NCIMB 13689 / SK2).